The primary structure comprises 187 residues: Elongation factor P (187 aa).

It belongs to the elongation factor P family.

The protein localises to the cytoplasm. Its pathway is protein biosynthesis; polypeptide chain elongation. Involved in peptide bond synthesis. Stimulates efficient translation and peptide-bond synthesis on native or reconstituted 70S ribosomes in vitro. Probably functions indirectly by altering the affinity of the ribosome for aminoacyl-tRNA, thus increasing their reactivity as acceptors for peptidyl transferase. The protein is Elongation factor P of Parasynechococcus marenigrum (strain WH8102).